The chain runs to 408 residues: Na(+)-translocating NADH-quinone reductase subunit F (408 aa).

Residues 4-24 (IYLGVGMFTIIVLVLVAIIMF) form a helical membrane-spanning segment. The region spanning 33–127 (GDVEILINDD…DMEIELPEEV (95 aa)) is the 2Fe-2S ferredoxin-type domain. [2Fe-2S] cluster is bound by residues cysteine 70, cysteine 76, cysteine 79, and cysteine 111. One can recognise an FAD-binding FR-type domain in the interval 130-270 (IRKWDCTVKS…SGPFGEFFAK (141 aa)).

The protein belongs to the NqrF family. Composed of six subunits; NqrA, NqrB, NqrC, NqrD, NqrE and NqrF. [2Fe-2S] cluster is required as a cofactor. The cofactor is FAD.

Its subcellular location is the cell inner membrane. It carries out the reaction a ubiquinone + n Na(+)(in) + NADH + H(+) = a ubiquinol + n Na(+)(out) + NAD(+). Functionally, NQR complex catalyzes the reduction of ubiquinone-1 to ubiquinol by two successive reactions, coupled with the transport of Na(+) ions from the cytoplasm to the periplasm. The first step is catalyzed by NqrF, which accepts electrons from NADH and reduces ubiquinone-1 to ubisemiquinone by a one-electron transfer pathway. The sequence is that of Na(+)-translocating NADH-quinone reductase subunit F from Idiomarina loihiensis (strain ATCC BAA-735 / DSM 15497 / L2-TR).